Reading from the N-terminus, the 100-residue chain is MAKKSMIEREKKRIKLNNKYTPKRNTLLQAYRQTEDFQSRLDIHSKIQKLPRNSAKNRIRNRCWKTGRPRGFYRDFGVSRHVLREMAHSCLLPGVTKSSW.

The protein belongs to the universal ribosomal protein uS14 family. In terms of assembly, part of the 30S ribosomal subunit.

Its subcellular location is the plastid. The protein resides in the chloroplast. Binds 16S rRNA, required for the assembly of 30S particles. The sequence is that of Small ribosomal subunit protein uS14c from Trieres chinensis (Marine centric diatom).